Here is a 144-residue protein sequence, read N- to C-terminus: MKKVAGIVKLQLPAGKATPAPPVGPALGQYGANIMEFTKAFNAQTADKGDAIIPVEITIYADRSFTFITKTPPMSYLIRKAAGIGKGSSTPNKAKVGKLNWDQVLEIAKTKMPDLNAGSVEAAANTVAGTARSMGVTVEGGPNA.

This sequence belongs to the universal ribosomal protein uL11 family. As to quaternary structure, part of the ribosomal stalk of the 50S ribosomal subunit. Interacts with L10 and the large rRNA to form the base of the stalk. L10 forms an elongated spine to which L12 dimers bind in a sequential fashion forming a multimeric L10(L12)X complex. Contacts the CTC protein (RL25). One or more lysine residues are methylated.

Its function is as follows. Forms part of the ribosomal stalk which helps the ribosome interact with GTP-bound translation factors. The chain is Large ribosomal subunit protein uL11 from Deinococcus radiodurans (strain ATCC 13939 / DSM 20539 / JCM 16871 / CCUG 27074 / LMG 4051 / NBRC 15346 / NCIMB 9279 / VKM B-1422 / R1).